The sequence spans 238 residues: Small ribosomal subunit protein uS2 (238 aa).

Belongs to the universal ribosomal protein uS2 family.

The sequence is that of Small ribosomal subunit protein uS2 from Synechococcus sp. (strain CC9605).